A 207-amino-acid polypeptide reads, in one-letter code: 3-isopropylmalate dehydratase small subunit (207 aa).

The protein belongs to the LeuD family. LeuD type 1 subfamily. Heterodimer of LeuC and LeuD.

The catalysed reaction is (2R,3S)-3-isopropylmalate = (2S)-2-isopropylmalate. Its pathway is amino-acid biosynthesis; L-leucine biosynthesis; L-leucine from 3-methyl-2-oxobutanoate: step 2/4. Catalyzes the isomerization between 2-isopropylmalate and 3-isopropylmalate, via the formation of 2-isopropylmaleate. The polypeptide is 3-isopropylmalate dehydratase small subunit (Acidithiobacillus ferrooxidans (strain ATCC 23270 / DSM 14882 / CIP 104768 / NCIMB 8455) (Ferrobacillus ferrooxidans (strain ATCC 23270))).